A 312-amino-acid chain; its full sequence is Acetaldehyde dehydrogenase (312 aa).

12-15 (SGNI) is a binding site for NAD(+). C132 (acyl-thioester intermediate) is an active-site residue. Residues 163–171 (SAGPGTRAN) and N290 each bind NAD(+).

Belongs to the acetaldehyde dehydrogenase family. Heterotetramer composed of two DmpG (aldolase) and two DmpF (dehydrogenase) subunits, which allows a direct channeling of acetaldehyde between the two active sites.

It catalyses the reaction acetaldehyde + NAD(+) + CoA = acetyl-CoA + NADH + H(+). The protein operates within aromatic compound metabolism; phenol degradation. Its activity is regulated as follows. Is not activated by Mn(2+), Mg(2+), Ca(2+), Zn(2+) or Co(2+). Its function is as follows. Catalyzes the conversion of acetaldehyde to acetyl-CoA, using NAD(+) and coenzyme A. Can also act on propanal and butanal to form propanoyl-CoA and butanoyl-CoA, respectively. Is the final enzyme in the meta-cleavage pathway for the degradation of aromatic compounds such as phenols, cresols and catechols. NADP(+) can replace NAD(+) but the rate of reaction is much slower. This is Acetaldehyde dehydrogenase (dmpF) from Pseudomonas sp. (strain CF600).